Consider the following 126-residue polypeptide: Phosphoribosyl-AMP cyclohydrolase (126 aa).

Aspartate 82 serves as a coordination point for Mg(2+). Cysteine 83 lines the Zn(2+) pocket. Positions 84 and 86 each coordinate Mg(2+). Cysteine 99 and cysteine 106 together coordinate Zn(2+).

Belongs to the PRA-CH family. In terms of assembly, homodimer. Mg(2+) serves as cofactor. The cofactor is Zn(2+).

Its subcellular location is the cytoplasm. The catalysed reaction is 1-(5-phospho-beta-D-ribosyl)-5'-AMP + H2O = 1-(5-phospho-beta-D-ribosyl)-5-[(5-phospho-beta-D-ribosylamino)methylideneamino]imidazole-4-carboxamide. Its pathway is amino-acid biosynthesis; L-histidine biosynthesis; L-histidine from 5-phospho-alpha-D-ribose 1-diphosphate: step 3/9. Its function is as follows. Catalyzes the hydrolysis of the adenine ring of phosphoribosyl-AMP. This Sphingopyxis alaskensis (strain DSM 13593 / LMG 18877 / RB2256) (Sphingomonas alaskensis) protein is Phosphoribosyl-AMP cyclohydrolase.